Here is a 68-residue protein sequence, read N- to C-terminus: QWIPGQSCTNADCGEGQCCTGGSYNRHCQSLSDDGKPCQRPNKYDEYKFGCPCKEGLMCQVINYCQKK.

Residue Gln-1 is modified to Pyrrolidone carboxylic acid. 5 disulfides stabilise this stretch: Cys-8–Cys-19, Cys-13–Cys-28, Cys-18–Cys-51, Cys-38–Cys-59, and Cys-53–Cys-65.

In terms of tissue distribution, expressed by the venom gland.

The protein resides in the secreted. Non-toxic to mice and insects. This Phoneutria nigriventer (Brazilian armed spider) protein is U19-ctenitoxin-Pn1a.